Consider the following 385-residue polypeptide: Heat-inducible transcription repressor HrcA (385 aa).

Belongs to the HrcA family.

Its function is as follows. Negative regulator of class I heat shock genes (grpE-dnaK-dnaJ and groELS operons). Prevents heat-shock induction of these operons. The sequence is that of Heat-inducible transcription repressor HrcA from Protochlamydia amoebophila (strain UWE25).